Reading from the N-terminus, the 420-residue chain is Pyrophosphate--fructose 6-phosphate 1-phosphotransferase (420 aa).

Glycine 13 is a diphosphate binding site. Residues 142–144 (TVD), 190–192 (MGR), glutamate 247, and 297–300 (YLQR) contribute to the substrate site. Aspartate 144 serves as the catalytic Proton acceptor.

Belongs to the phosphofructokinase type A (PFKA) family. PPi-dependent PFK group II subfamily. Clade 'B2' sub-subfamily. Homodimer. Mg(2+) serves as cofactor. It depends on Co(2+) as a cofactor. The cofactor is Mn(2+).

Its subcellular location is the cytoplasm. It carries out the reaction beta-D-fructose 6-phosphate + diphosphate = beta-D-fructose 1,6-bisphosphate + phosphate + H(+). It functions in the pathway carbohydrate degradation; glycolysis; D-glyceraldehyde 3-phosphate and glycerone phosphate from D-glucose: step 3/4. With respect to regulation, non-allosteric. In terms of biological role, catalyzes the phosphorylation of D-fructose 6-phosphate, the first committing step of glycolysis. Uses inorganic phosphate (PPi) as phosphoryl donor instead of ATP like common ATP-dependent phosphofructokinases (ATP-PFKs), which renders the reaction reversible, and can thus function both in glycolysis and gluconeogenesis. Consistently, PPi-PFK can replace the enzymes of both the forward (ATP-PFK) and reverse (fructose-bisphosphatase (FBPase)) reactions. This is Pyrophosphate--fructose 6-phosphate 1-phosphotransferase from Methylococcus capsulatus (strain ATCC 33009 / NCIMB 11132 / Bath).